The primary structure comprises 1899 residues: Protocadherin-15 (1899 aa).

The N-terminal stretch at 1–26 (MLQQFCLWKWLAVGIAVATILASSLA) is a signal peptide. Residues 27 to 1376 (QNDEDCKLAR…AQAVGYTEGA (1350 aa)) lie on the Extracellular side of the membrane. Cys32 and Cys120 are disulfide-bonded. 11 consecutive Cadherin domains span residues 38–147 (GPPA…SPQF), 148–265 (QQQR…GPMF), 278–395 (RPLT…KPYF), 396–509 (TKST…SPTF), 510–616 (SNIS…PPRF), 617–717 (PQLM…GPVF), 719–819 (MFLP…SPVF), 820–926 (TNAS…SPVF), 927–1035 (SKTL…IPRF), 1037–1144 (QDEY…APVF), and 1145–1259 (TKKM…PPTL). The chain crosses the membrane as a helical span at residues 1377 to 1397 (LLALAVIIILCCMPAILIVMV). Residues 1398–1899 (SYRQRQAECA…KRFPSQSTAL (502 aa)) are Cytoplasmic-facing. Disordered stretches follow at residues 1668–1687 (SPCL…VVEP), 1700–1721 (HDYP…SFRI), and 1734–1820 (TKGE…RREL). Composition is skewed to pro residues over residues 1706-1717 (LSPPPTRKPTPP) and 1743-1773 (PDPP…PPTL). Low complexity predominate over residues 1774–1791 (PLASVPSSSSLPSTQHLS). Positions 1804–1814 (AVPPPAAVPEP) are enriched in pro residues.

In the utricle, localizes to the distal region of the kinocilium and near the tips of the stereocilia.

The protein resides in the cell membrane. Functionally, calcium-dependent cell-adhesion protein. Required for inner ear neuroepithelial cell elaboration and cochlear function. Probably involved in the maintenance of normal retinal function. This chain is Protocadherin-15 (Pcdh15), found in Gallus gallus (Chicken).